Here is a 544-residue protein sequence, read N- to C-terminus: Chaperonin GroEL (544 aa).

ATP contacts are provided by residues 29–32 (TLGP), 86–90 (DGTTT), Gly-413, 476–478 (NAL), and Asp-492.

The protein belongs to the chaperonin (HSP60) family. In terms of assembly, forms a cylinder of 14 subunits composed of two heptameric rings stacked back-to-back. Interacts with the co-chaperonin GroES.

The protein localises to the cytoplasm. The enzyme catalyses ATP + H2O + a folded polypeptide = ADP + phosphate + an unfolded polypeptide.. Its function is as follows. Together with its co-chaperonin GroES, plays an essential role in assisting protein folding. The GroEL-GroES system forms a nano-cage that allows encapsulation of the non-native substrate proteins and provides a physical environment optimized to promote and accelerate protein folding. This chain is Chaperonin GroEL, found in Desulfitobacterium hafniense (strain Y51).